The chain runs to 885 residues: Alanine--tRNA ligase (885 aa).

Zn(2+)-binding residues include His-571, His-575, Cys-674, and His-678.

Belongs to the class-II aminoacyl-tRNA synthetase family. It depends on Zn(2+) as a cofactor.

Its subcellular location is the cytoplasm. The enzyme catalyses tRNA(Ala) + L-alanine + ATP = L-alanyl-tRNA(Ala) + AMP + diphosphate. Catalyzes the attachment of alanine to tRNA(Ala) in a two-step reaction: alanine is first activated by ATP to form Ala-AMP and then transferred to the acceptor end of tRNA(Ala). Also edits incorrectly charged Ser-tRNA(Ala) and Gly-tRNA(Ala) via its editing domain. The chain is Alanine--tRNA ligase from Clavibacter michiganensis subsp. michiganensis (strain NCPPB 382).